The chain runs to 288 residues: Zinc finger protein ZAT9 (288 aa).

The segment at 4 to 26 (YKCRVCFKSFVNGKALGGHMRSH) adopts a C2H2-type 1 zinc-finger fold. Disordered regions lie at residues 20-82 (GGHM…LTRK), 101-123 (SQLG…DTTT), and 189-210 (GGHR…QRSE). Polar residues predominate over residues 37–52 (PSQLSYETESDVSSSD). 2 consecutive C2H2-type zinc fingers follow at residues 173–195 (YKCE…RASH) and 224–246 (HECP…KRSH).

It localises to the nucleus. Its function is as follows. Probable transcription factor that may be involved in stress responses. This is Zinc finger protein ZAT9 (ZAT9) from Arabidopsis thaliana (Mouse-ear cress).